The sequence spans 283 residues: Protease HtpX (283 aa).

2 consecutive transmembrane segments (helical) span residues 4-24 and 33-53; these read ILLFLATNMAVMLVLGIILNV and GGILIMALLFGFAGSLISLFL. His-139 lines the Zn(2+) pocket. Glu-140 is an active-site residue. Residue His-143 participates in Zn(2+) binding. 2 consecutive transmembrane segments (helical) span residues 147-167 and 190-210; these read GDMVTMALLQGVLNTFVIFLS and IYFLVSMVLEMLFGVLASIIA. Glu-218 provides a ligand contact to Zn(2+).

This sequence belongs to the peptidase M48B family. Zn(2+) serves as cofactor.

It localises to the cell inner membrane. The chain is Protease HtpX from Haemophilus influenzae (strain 86-028NP).